Here is a 224-residue protein sequence, read N- to C-terminus: MGQKINPNGFRLGVIHDWESKWYADKGYKETLNEDLRIRKFISKKLKDASVSTVEIERAANRINISIHTAKPGMVIGKGGSEVEALRKQLNALTDKQVHINIVEIKKPDLDAELVADSIARQLEARIAFRRAMRQATQRAMRAGAKGIKVQTSGRLNGADMARREWHTEGRVPLQTLRADIDYAWVNAFTTYGEIGVQVWINRGEILPTRKNKPASKPTKGGNR.

One can recognise a KH type-2 domain in the interval 38–106; sequence IRKFISKKLK…QVHINIVEIK (69 aa).

It belongs to the universal ribosomal protein uS3 family. In terms of assembly, part of the 30S ribosomal subunit. Forms a tight complex with proteins S10 and S14.

Its function is as follows. Binds the lower part of the 30S subunit head. Binds mRNA in the 70S ribosome, positioning it for translation. The sequence is that of Small ribosomal subunit protein uS3 from Lactobacillus helveticus (strain DPC 4571).